Reading from the N-terminus, the 487-residue chain is UDP-glycosyltransferase 72E1 (487 aa).

Histidine 18 acts as the Proton acceptor in catalysis. Histidine 18 contributes to the an anthocyanidin binding site. The Charge relay role is filled by aspartate 116. 7 residues coordinate UDP-alpha-D-glucose: alanine 351, glutamine 353, histidine 368, tryptophan 371, asparagine 372, serine 373, and glutamate 376. Alanine 391 contacts an anthocyanidin. Positions 392 and 393 each coordinate UDP-alpha-D-glucose.

Belongs to the UDP-glycosyltransferase family. In terms of assembly, interacts with SIS8. Expressed in seedlings, roots and leaves.

It is found in the nucleus. The catalysed reaction is (E)-coniferaldehyde + UDP-alpha-D-glucose = 4-O-(beta-D-glucosyl)-4-(E)-coniferyl aldehyde + UDP + H(+). The enzyme catalyses (E)-sinapaldehyde + UDP-alpha-D-glucose = 4-O-(beta-D-glucosyl)-4-trans-sinapoyl aldehyde + UDP + H(+). UDP-glycosyltransferase that glucosylates coniferyl aldehyde to form coniferyl aldehyde 4-O-glucoside. Glucosylates sinapyl aldehyde to form sinapyl aldehyde 4-O-glucoside. Is not active in presence of coniferyl alcohol or sinapyl alcohol. Can glucosylate the phytotoxic xenobiotic compound 2,4,5-trichlorophenol (TCP). This is UDP-glycosyltransferase 72E1 from Arabidopsis thaliana (Mouse-ear cress).